The sequence spans 504 residues: Probable cytochrome P450 305a1 (504 aa).

C450 provides a ligand contact to heme.

It belongs to the cytochrome P450 family. It depends on heme as a cofactor.

Its subcellular location is the endoplasmic reticulum membrane. It is found in the microsome membrane. Its function is as follows. May be involved in the metabolism of insect hormones and in the breakdown of synthetic insecticides. The protein is Probable cytochrome P450 305a1 (Cyp305a1) of Drosophila melanogaster (Fruit fly).